The following is a 185-amino-acid chain: Orotate phosphoribosyltransferase (185 aa).

Residues arginine 99, lysine 100, lysine 103, and 125–133 (EDVTTTGGS) contribute to the 5-phospho-alpha-D-ribose 1-diphosphate site. Residues threonine 129 and arginine 157 each coordinate orotate.

This sequence belongs to the purine/pyrimidine phosphoribosyltransferase family. PyrE subfamily. Homodimer. Requires Mg(2+) as cofactor.

The catalysed reaction is orotidine 5'-phosphate + diphosphate = orotate + 5-phospho-alpha-D-ribose 1-diphosphate. The protein operates within pyrimidine metabolism; UMP biosynthesis via de novo pathway; UMP from orotate: step 1/2. Its function is as follows. Catalyzes the transfer of a ribosyl phosphate group from 5-phosphoribose 1-diphosphate to orotate, leading to the formation of orotidine monophosphate (OMP). The chain is Orotate phosphoribosyltransferase from Methanococcus maripaludis (strain DSM 14266 / JCM 13030 / NBRC 101832 / S2 / LL).